Here is a 249-residue protein sequence, read N- to C-terminus: Tryptophan synthase alpha chain (249 aa).

Active-site proton acceptor residues include E43 and D54.

Belongs to the TrpA family. As to quaternary structure, tetramer of two alpha and two beta chains.

The enzyme catalyses (1S,2R)-1-C-(indol-3-yl)glycerol 3-phosphate + L-serine = D-glyceraldehyde 3-phosphate + L-tryptophan + H2O. The protein operates within amino-acid biosynthesis; L-tryptophan biosynthesis; L-tryptophan from chorismate: step 5/5. Its function is as follows. The alpha subunit is responsible for the aldol cleavage of indoleglycerol phosphate to indole and glyceraldehyde 3-phosphate. The protein is Tryptophan synthase alpha chain of Campylobacter jejuni subsp. jejuni serotype O:6 (strain 81116 / NCTC 11828).